We begin with the raw amino-acid sequence, 185 residues long: Large ribosomal subunit protein uL5 (185 aa).

Belongs to the universal ribosomal protein uL5 family. Part of the 50S ribosomal subunit; part of the 5S rRNA/L5/L18/L25 subcomplex. Contacts the 5S rRNA and the P site tRNA. Forms a bridge to the 30S subunit in the 70S ribosome.

Functionally, this is one of the proteins that bind and probably mediate the attachment of the 5S RNA into the large ribosomal subunit, where it forms part of the central protuberance. In the 70S ribosome it contacts protein S13 of the 30S subunit (bridge B1b), connecting the 2 subunits; this bridge is implicated in subunit movement. Contacts the P site tRNA; the 5S rRNA and some of its associated proteins might help stabilize positioning of ribosome-bound tRNAs. The sequence is that of Large ribosomal subunit protein uL5 from Bartonella quintana (strain Toulouse) (Rochalimaea quintana).